We begin with the raw amino-acid sequence, 372 residues long: N-methyl-L-tryptophan oxidase (372 aa).

FAD is bound at residue 4–34; it reads DLIIIGSGSVGAAAGYYATRAGLKVLMTDAH. Cys-307 carries the S-8alpha-FAD cysteine modification.

It belongs to the MSOX/MTOX family. MTOX subfamily. As to quaternary structure, monomer. Requires FAD as cofactor.

The enzyme catalyses N(alpha)-methyl-L-tryptophan + O2 + H2O = L-tryptophan + formaldehyde + H2O2. Functionally, catalyzes the oxidative demethylation of N-methyl-L-tryptophan. This is N-methyl-L-tryptophan oxidase from Salmonella newport (strain SL254).